The primary structure comprises 129 residues: Ribosome-binding factor A (129 aa).

This sequence belongs to the RbfA family. Monomer. Binds 30S ribosomal subunits, but not 50S ribosomal subunits or 70S ribosomes.

The protein localises to the cytoplasm. One of several proteins that assist in the late maturation steps of the functional core of the 30S ribosomal subunit. Associates with free 30S ribosomal subunits (but not with 30S subunits that are part of 70S ribosomes or polysomes). Required for efficient processing of 16S rRNA. May interact with the 5'-terminal helix region of 16S rRNA. The polypeptide is Ribosome-binding factor A (Ectopseudomonas mendocina (strain ymp) (Pseudomonas mendocina)).